A 194-amino-acid polypeptide reads, in one-letter code: Imidazoleglycerol-phosphate dehydratase (194 aa).

This sequence belongs to the imidazoleglycerol-phosphate dehydratase family.

It is found in the cytoplasm. It catalyses the reaction D-erythro-1-(imidazol-4-yl)glycerol 3-phosphate = 3-(imidazol-4-yl)-2-oxopropyl phosphate + H2O. It participates in amino-acid biosynthesis; L-histidine biosynthesis; L-histidine from 5-phospho-alpha-D-ribose 1-diphosphate: step 6/9. This is Imidazoleglycerol-phosphate dehydratase from Streptococcus sanguinis (strain SK36).